The following is a 310-amino-acid chain: MVVSEKSKILIIGGTGYIGKYLVETSAKSGHPTFVLIRESTLVNPEKSKLIDTFKSYGVTLLFGDISNQESLLKAIKQVDVVISTVGGQQFADQVNIIKAIKEAGNIKRFLPSEFGFDVDHAHAIEPAASLFALKVKIRRMIEAEGIPYTYVICNWFADFFLPNLGQLEAKTPPRDKVVIFGDGNPKAIYVKEEDIATYTMKAVDDPRTLNKTLHMRPPANILSFNEIVSLWEEKIGKTLEKLYLSEEDILHIVQEGPMPLRVNLAICHSVFVNGDSANFEIQPSTGVEATELYPKVKYTTVDEYYNKFV.

Residues 13–19 (GGTGYIG), R38, and K47 each bind NADP(+). The active-site Proton acceptor is the K135. Residue R139 participates in NADP(+) binding.

The protein belongs to the NmrA-type oxidoreductase family. Isoflavone reductase subfamily. As to quaternary structure, monomer. Expressed in roots.

It localises to the cytoplasm. The protein operates within alkaloid biosynthesis; nicotine biosynthesis. In terms of biological role, involved in the biosynthesis of pyridine alkaloid natural products, leading mainly to the production of anabasine, anatabine, nicotine and nornicotine, effective deterrents against herbivores with antiparasitic and pesticide properties (neurotoxins); nornicotine serves as the precursor in the synthesis of the carcinogen compound N'-nitrosonornicotine (NNN). Reductase that may be involved in a late step of tobacco alkaloid biosynthesis. Maybe involved in either the formation of a nicotinic acid-derived precursor or the final condensation reaction of tobacco alkaloids. This Nicotiana tabacum (Common tobacco) protein is Isoflavone reductase homolog A622-like.